The following is a 159-amino-acid chain: Transcriptional repressor NrdR (159 aa).

A zinc finger lies at 3–34 (CPFCRHDDTQVVDSRVSEDGAAIRRRRRCSAC). One can recognise an ATP-cone domain in the interval 49 to 139 (PAVVKKDGSR…VYRRFEDVSE (91 aa)).

Belongs to the NrdR family. Zn(2+) serves as cofactor.

Functionally, negatively regulates transcription of bacterial ribonucleotide reductase nrd genes and operons by binding to NrdR-boxes. This Burkholderia thailandensis (strain ATCC 700388 / DSM 13276 / CCUG 48851 / CIP 106301 / E264) protein is Transcriptional repressor NrdR.